A 218-amino-acid chain; its full sequence is Albicidin resistance protein (218 aa).

Its subcellular location is the periplasm. Functionally, albicidin resistance protein binds to form a complex without antibiotic activity but without catalyzing any further chemical modifications to albicidin. This is Albicidin resistance protein from Klebsiella oxytoca.